The following is a 49-amino-acid chain: Delta-actitoxin-Axm1b (49 aa).

The well-structured region stretch occupies residues 1–7 (GVPCLCD). 3 cysteine pairs are disulfide-bonded: Cys-4/Cys-46, Cys-6/Cys-36, and Cys-29/Cys-47. The interval 8-17 (SDGPRPRGNT) is arg-14 loop (non-well-structured region). Residues 18–49 (LSGILWFYPSGCPSGWHNCKAHGPNIGWCCKK) are well-structured region.

This sequence belongs to the sea anemone sodium channel inhibitory toxin family. Type I subfamily.

It is found in the secreted. The protein resides in the nematocyst. Its function is as follows. Binds specifically to voltage-gated sodium channels (Nav) (site 3), thereby delaying their inactivation. This toxin has the highest affinity of all anemone toxins for the mammalian sodium channel, whereas its paralog Anthopleurin-A retains the greatest capacity to discriminate between cardiac (Nav1.5/SCN5A) and neuronal sodium channels. When tested electrophysiologically, this toxin exhibits a high affinity for multiple sodium channels with a 50-fold preference for rat cardiac (Nav1.5/SCN5A) over neuronal channels (0.1 nM versus 5 nM). When tested by ion flux, the affinities are similar and appear to have higher affinity (9 nM versus 22 nM). The residue Lys-37 of this toxin has been shown to interact with channel Nav1.5 (residue Asp-1612 in rat and Asp-1610 in human), which is located in the DIV S3-S4 linker (corresponding to channel site 3). Selectively modifies sodium channel inactivation from the open state with little effect on channel activation or on inactivation from closed states. Does not display phospholipid-binding activities, suggesting that the domain IV S3-S4 linker is located at the extracellular surface and not buried in the phospholipid bilayer. The sequence is that of Delta-actitoxin-Axm1b from Anthopleura xanthogrammica (Giant green sea anemone).